A 433-amino-acid chain; its full sequence is Sensor protein RstB (433 aa).

Over 1–3 the chain is Cytoplasmic; that stretch reads MKK. Residues 4–24 traverse the membrane as a helical segment; it reads LFIQFYLLLFVCFLVMSLLVG. Topologically, residues 25-135 are periplasmic; that stretch reads LVYKFTAERA…PYLYYLHQMR (111 aa). A helical transmembrane segment spans residues 136–156; that stretch reads LLDIALIAFIAISLAFPVFIW. Residues 157–433 are Cytoplasmic-facing; it reads MRPHWQDMLK…WHNIPQFTSA (277 aa). In terms of domain architecture, HAMP spans 158 to 210; it reads RPHWQDMLKLEAAAQRFGDGHLNERIHFDEGSSFERLGVAFNQMADNINALIA. Residues 218–425 enclose the Histidine kinase domain; that stretch reads GIAHELRTPL…RFSFSWPLWH (208 aa). His276 carries the phosphohistidine; by autocatalysis modification.

Post-translationally, autophosphorylated.

Its subcellular location is the cell inner membrane. The enzyme catalyses ATP + protein L-histidine = ADP + protein N-phospho-L-histidine.. In terms of biological role, member of the two-component regulatory system RstB/RstA. RstB functions as a membrane-associated protein kinase that phosphorylates RstA. The polypeptide is Sensor protein RstB (rstB) (Escherichia coli (strain K12)).